The sequence spans 423 residues: Putative competence-damage inducible protein (423 aa).

It belongs to the CinA family.

This is Putative competence-damage inducible protein from Streptococcus equi subsp. equi (strain 4047).